The primary structure comprises 325 residues: Isoaspartyl peptidase/L-asparaginase (325 aa).

Threonine 193 serves as the catalytic Nucleophile. Residues arginine 221–aspartate 224 and threonine 243–glycine 246 contribute to the substrate site.

It belongs to the Ntn-hydrolase family. Heterotetramer of two alpha and two beta chains arranged as a dimer of alpha/beta heterodimers. Post-translationally, cleaved into an alpha and beta chain by autocatalysis; this activates the enzyme. The N-terminal residue of the beta subunit is responsible for the nucleophile hydrolase activity. Developing seeds.

The enzyme catalyses Cleavage of a beta-linked Asp residue from the N-terminus of a polypeptide.. Functionally, acts in asparagine catabolism but also in the final steps of protein degradation via hydrolysis of a range of isoaspartyl dipeptides. The sequence is that of Isoaspartyl peptidase/L-asparaginase from Lupinus angustifolius (Narrow-leaved blue lupine).